The primary structure comprises 384 residues: Viral protein 1 (384 aa).

The polypeptide is Viral protein 1 (Chaetoceros setoense (Chaetoceros setoense DNA virus)).